We begin with the raw amino-acid sequence, 264 residues long: DNA-directed RNA polymerase subunit Rpo3 (264 aa).

[3Fe-4S] cluster is bound by residues Cys203, Cys206, and Cys209.

The protein belongs to the archaeal Rpo3/eukaryotic RPB3 RNA polymerase subunit family. Part of the RNA polymerase complex. The cofactor is [3Fe-4S] cluster.

It localises to the cytoplasm. It catalyses the reaction RNA(n) + a ribonucleoside 5'-triphosphate = RNA(n+1) + diphosphate. In terms of biological role, DNA-dependent RNA polymerase (RNAP) catalyzes the transcription of DNA into RNA using the four ribonucleoside triphosphates as substrates. The polypeptide is DNA-directed RNA polymerase subunit Rpo3 (Archaeoglobus fulgidus (strain ATCC 49558 / DSM 4304 / JCM 9628 / NBRC 100126 / VC-16)).